We begin with the raw amino-acid sequence, 468 residues long: Phosphatidylglycerol--prolipoprotein diacylglyceryl transferase (468 aa).

3 helical membrane-spanning segments follow: residues 21–41, 56–76, and 96–116; these read LPVRAYAVCVITGIIVALLIG, YDIALWAVPFGLIGGRLYHLA, and IWDGGLGIWGAVTLGVMGAWI. Arginine 144 provides a ligand contact to a 1,2-diacyl-sn-glycero-3-phospho-(1'-sn-glycerol). A run of 3 helical transmembrane segments spans residues 192–212, 218–238, and 256–276; these read VVQPTFLYELIWNVLVFVALI, FIIGHGRLFGFYVAFYCAGRF, and INSFTSTFVFIGAVVYIILAP. Positions 349-468 are disordered; it reads VVQVADRDGE…RWWRLRRRRQ (120 aa). The span at 391–406 shows a compositional bias: low complexity; it reads AEAASAAPEEPAALAS. Positions 445 to 455 are enriched in basic and acidic residues; sequence DGIRRQDDFSS. Residues 456 to 468 show a composition bias toward basic residues; sequence RRRRWWRLRRRRQ.

It belongs to the Lgt family.

The protein localises to the cell membrane. It carries out the reaction L-cysteinyl-[prolipoprotein] + a 1,2-diacyl-sn-glycero-3-phospho-(1'-sn-glycerol) = an S-1,2-diacyl-sn-glyceryl-L-cysteinyl-[prolipoprotein] + sn-glycerol 1-phosphate + H(+). It functions in the pathway protein modification; lipoprotein biosynthesis (diacylglyceryl transfer). Its function is as follows. Catalyzes the transfer of the diacylglyceryl group from phosphatidylglycerol to the sulfhydryl group of the N-terminal cysteine of a prolipoprotein, the first step in the formation of mature lipoproteins. In Mycobacterium bovis (strain ATCC BAA-935 / AF2122/97), this protein is Phosphatidylglycerol--prolipoprotein diacylglyceryl transferase.